The primary structure comprises 35 residues: Pheromone-binding protein (35 aa).

This sequence belongs to the PBP/GOBP family. Antenna.

Functionally, this major soluble protein in olfactory sensilla of male moths might serve to solubilize the extremely hydrophobic pheromone molecules and to transport pheromone through the aqueous lymph to receptors located on olfactory cilia. This is Pheromone-binding protein from Hyalophora cecropia (Cecropia moth).